The following is a 544-amino-acid chain: MSAKDIKFGSEARNLMLDGVNMLANAVKVTLGPKGRNVVLDKSFGGPTITKDGVSVAQEITLEGKFENMGAQMVKEVASKTNDIAGDGTTTATVLAQALVIEGVKSVAAGMNPMDLKRGIDKATETAVNALREFSQPCNDTKAIAQVGTISANSDISVGDIIADAMEKVGQAGVITVEEGSGFENELDVVEGMQFDRGYLSPYFVNNQESMTANLETPFVLLHDGKISNIRDLLPTLEAVQKSGKALLIIAEDIDGEALATLVVNNMRGIVKVAAVKAPGFGDRRKAILEDIAVLTGGMVISEEVGLSLEKVTEEHLGTAKRIEIGKENTVIVDGAGKKVDIDGRIAQIKAQIETTTSDYDKEKLLERLAKLSGGVAVIKVGAATEVEMKEKKGRVDDALHATRAAVEEGVVPGGGVALVRVIKALDGLTGDNHDQNIGIDIAKRAMEAPLRQIVTNGGGEASVILNEVAKGKDNYGYNAATEKYGDMLKMGILDPTKVVRAALQHAASISGLMITTEAMITDTPQDTPATAAAPDMGGMGGMM.

Residues 30–33 (TLGP), Lys-51, 87–91 (DGTTT), Gly-415, 479–481 (NAA), and Asp-495 each bind ATP. The span at 525 to 537 (PQDTPATAAAPDM) shows a compositional bias: low complexity. The tract at residues 525 to 544 (PQDTPATAAAPDMGGMGGMM) is disordered.

Belongs to the chaperonin (HSP60) family. As to quaternary structure, forms a cylinder of 14 subunits composed of two heptameric rings stacked back-to-back. Interacts with the co-chaperonin GroES.

The protein localises to the cytoplasm. The catalysed reaction is ATP + H2O + a folded polypeptide = ADP + phosphate + an unfolded polypeptide.. Functionally, together with its co-chaperonin GroES, plays an essential role in assisting protein folding. The GroEL-GroES system forms a nano-cage that allows encapsulation of the non-native substrate proteins and provides a physical environment optimized to promote and accelerate protein folding. This chain is Chaperonin GroEL, found in Ruthia magnifica subsp. Calyptogena magnifica.